Here is a 734-residue protein sequence, read N- to C-terminus: Meiotic driver SPOK1 (734 aa).

The stretch at 4-41 forms a coiled coil; it reads KDRIAQLLRELEEAKARVEEAKAREAQERCEKERLQLE. Disordered regions lie at residues 180–222 and 414–499; these read ELTQ…ICSN and LSSA…MADP. Residues 416 to 429 are compositionally biased toward polar residues; it reads SAPSSQNTDISEYT. Residues 457 to 468 show a composition bias toward basic and acidic residues; it reads NEHDEHDEDHSE.

The protein localises to the cytoplasm. It localises to the nucleus. Promotes unequal transmission of alleles from the parental zygote to progeny spores by acting as poison/antidote system, leading to poisoning of progeny that do not inherit the allele. May possess DNA nuclease activity that leads to spore killing, and a kinase activity that confers resistance to the nuclease activity. Can suppress meiotic drive by the P.anserina SPOK2, SPOK3 and SPOK4 proteins. In Podospora comata, this protein is Meiotic driver SPOK1.